The primary structure comprises 1700 residues: MYVNQIDDIIDGILNKLYFEGLSNDESFNSIVNSNKINFVEYREQINKFIDDFVKSIDLTEIRKIINNKDNLNRIIDIIKRYVAYYYFLSIAYNYTGSLKDFRNNMIQYSKLQESSTFIIRNFFDTENNYQLIKYFKIIKDTSKILLMTDLQRKTLNPLDVKDTIDFLNGLGKEYINNYLLMITVVDNEDTVNINPHNLIKTIVFGELYKNQERNLVFEILNEIEEDKEEYTYIDIVVSSDETNDLNNFRQIFLGEDDAEARARDLFELANETNRVTTIETVETKNNDLIALKIITPIVDDFLRYHRDTERLDAESGPVNIPIVSNNNSKNVQLALLYQQRKKKENTRAQLVINKLDAILDYYSPNVKNNPEFISEIKKYFQNPLSYRKAVLHNYLDEVNVIDKIRKQGKKAMENNEYFLELMQIITHAYFNFKDFKNFGTSINLFNTKPVNMLRYSNIEFQNQMSNLEVDVHTGIEGQSVNLVGLAIGPFNDEPVSCTKKSDLLDIRKIQITYMKNDQPVTRSTDNGYKAFLKIIKHFYINTLEIREEPEFSIYNNFDDIRKLNPDIFGKMIYWTYNTELDTFEMDTYENIKSNSVQDIIRFMNAMIYDKIMDFLDKKLVLLIETHTNLSLSKIESLIQIFSNMNQLSIDQEERRDLVISNFLQKKSQETTIVPKKNLEIIPLPEYQPLNLKKPFVIGISMINPLNPQPYIKLEAYSRTTKDRGIIQATHGKCKHESEWNEINKVKNQNLNKYNSLVTAFIEKYHLETTQLDYVCKVCGQILPLKRYVQDGSFNNNTQQFVTAYVPIDIPLEEIKEYRKYVLAIRYIDALINRVSLITNTNMLVGTNTNVRQRRKGLVKNIIDIILKHNSVNMRKNISDVERSEYLAKKYNINKDLNEVYFFELDDSIFNFTPTASNTEITLNKLKFNNILLYFILIFITELNGPQITMMATDKIAGNIYVFLKYGQKLFGDLLIKTNINSNETAPITQYPVLCYLLYLLSYYLVKYKLWYQPGENTKVYNPYYSKVIINSFVDLFNGISSDAGRITDDYVYKLTVSKMYTQLNTTYRNNEIINILRRNQSKYDTRSSGIDTTQVTTENEIPTYPIANPINIPVKPRAIPDFKKSSGIIFDREDKILYPIQLTNTDITNCPIGSYHAWVSDGHDIRCTICGEKGSEVTGSVIRLDANYYYSLNNIANRRCIRGTLHDFIDKNGKLVCSICGHTPNETYDKPDLDKLMDNINKIDDQNAENLLRNIHNQQIKYENQQKVVEDFIREIKTDYAKDSNNKLYGRLGPICDKLITIFETYLGSNVNLDIDKYPVYLRNNIYIIDHSYNGTPLDKPVIFSQNENRILFRENHQFFKTDVYYYTDNRLQIDVFYHAVTLKLLGYKEKHKEYTRVAKTNSYLKINYSIMERLLMLGYKTKYIDIEDNFVRNSSRIKDVNTNYFQIIDNLIKDHINKIKKIIDKFSSTIYKIKNYQNQLNEEQEPIYLQSSQDIDKLISKYFNIIKIFNIGEDDKAFDNWNYLRTNFEYQEINWLDTNVRPSENMYVNSELVNYYDISSSEMMYYLVDQLISIIDSNPEKITRSNLCQMMVEIIMYIYNIYNIDEYKNILEFKRFDYIINGSSVMVDMLRRGQGLEQSKELEQHLDDTEPDIMQDMDGEPQEADELEDLKEEAESLDIEGDYFAEEDEDYAQEDFIE.

Residues 986-1006 (APITQYPVLCYLLYLLSYYLV) form a helical membrane-spanning segment. 2 coiled-coil regions span residues 1246–1278 (DQNA…REIK) and 1657–1684 (QDMD…IEGD). The segment at 1650–1700 (DTEPDIMQDMDGEPQEADELEDLKEEAESLDIEGDYFAEEDEDYAQEDFIE) is disordered. Residues 1651–1700 (TEPDIMQDMDGEPQEADELEDLKEEAESLDIEGDYFAEEDEDYAQEDFIE) show a composition bias toward acidic residues.

It is found in the host membrane. The protein localises to the virion. This is an uncharacterized protein from Acanthamoeba polyphaga (Amoeba).